The following is a 215-amino-acid chain: RNA pyrophosphohydrolase (215 aa).

The Nudix hydrolase domain occupies 6-149; the sequence is GFRPNVGIIL…KRDVYQLALT (144 aa). The Nudix box motif lies at 38 to 59; the sequence is GGIKYGETPMQAMYRELHEETG.

This sequence belongs to the Nudix hydrolase family. RppH subfamily. Requires a divalent metal cation as cofactor.

Functionally, accelerates the degradation of transcripts by removing pyrophosphate from the 5'-end of triphosphorylated RNA, leading to a more labile monophosphorylated state that can stimulate subsequent ribonuclease cleavage. This is RNA pyrophosphohydrolase from Burkholderia vietnamiensis (strain G4 / LMG 22486) (Burkholderia cepacia (strain R1808)).